We begin with the raw amino-acid sequence, 145 residues long: MLTAEEKAAVTGFWGKVKVDEVGAEALGRLLVVYPWTQRFFEHFGDLSSADAVMNNAKVKAHGKKVLDSFSNGMKHLDDLKGTFAQLSELHCDKLHVDPENFKLLGNVLVVVLARHHGSEFTPLLQAEFQKVVAGVANALAHRYH.

The 145-residue stretch at 1–145 (MLTAEEKAAV…VANALAHRYH (145 aa)) folds into the Globin domain. Residues His-62 and His-91 each contribute to the heme b site.

This sequence belongs to the globin family. Heterotetramer of two alpha chains and two beta chains. As to expression, red blood cells.

Functionally, involved in oxygen transport from the lung to the various peripheral tissues. This Capra hircus (Goat) protein is Hemoglobin subunit beta-A.